The sequence spans 131 residues: UPF0102 protein YraN (131 aa).

Over residues 1-19 (MATVPTRSGSPRQLTTKQT) the composition is skewed to polar residues. Residues 1–21 (MATVPTRSGSPRQLTTKQTGD) are disordered.

It belongs to the UPF0102 family.

The sequence is that of UPF0102 protein YraN from Shigella flexneri serotype 5b (strain 8401).